Consider the following 172-residue polypeptide: Co-chaperone protein HscB homolog (172 aa).

A J domain is found at 2 to 74; it reads NYFELFGLVE…LRRAEYLLSL (73 aa).

The protein belongs to the HscB family. In terms of assembly, interacts with HscA and stimulates its ATPase activity.

Its function is as follows. Co-chaperone involved in the maturation of iron-sulfur cluster-containing proteins. Seems to help targeting proteins to be folded toward HscA. The sequence is that of Co-chaperone protein HscB homolog from Aeromonas hydrophila subsp. hydrophila (strain ATCC 7966 / DSM 30187 / BCRC 13018 / CCUG 14551 / JCM 1027 / KCTC 2358 / NCIMB 9240 / NCTC 8049).